We begin with the raw amino-acid sequence, 360 residues long: Phospho-N-acetylmuramoyl-pentapeptide-transferase (360 aa).

10 consecutive transmembrane segments (helical) span residues 26 to 46, 74 to 94, 97 to 117, 134 to 154, 168 to 188, 199 to 219, 236 to 256, 263 to 283, 288 to 308, and 338 to 358; these read AILGLLTALIFSLWWGPKLIE, MGGLLILAAIFISVLLWGDLG, YVWVMLFVLGSFGLIGFIDDY, YILQSLAALLIAFFLYATAAN, VMPQLGGVFIVLAYFTIVGSS, GLAIMPTVMVAAAFALIAYLS, SGELVIVCTAIVGAGLGFLWF, VFMGDVGSLSLGAALGAIAVL, ILLVIMGGVFVMETVSVILQV, and VIVRFWIISIFLVLLGLATLK.

Belongs to the glycosyltransferase 4 family. MraY subfamily. The cofactor is Mg(2+).

It localises to the cell inner membrane. The enzyme catalyses UDP-N-acetyl-alpha-D-muramoyl-L-alanyl-gamma-D-glutamyl-meso-2,6-diaminopimeloyl-D-alanyl-D-alanine + di-trans,octa-cis-undecaprenyl phosphate = di-trans,octa-cis-undecaprenyl diphospho-N-acetyl-alpha-D-muramoyl-L-alanyl-D-glutamyl-meso-2,6-diaminopimeloyl-D-alanyl-D-alanine + UMP. It participates in cell wall biogenesis; peptidoglycan biosynthesis. Catalyzes the initial step of the lipid cycle reactions in the biosynthesis of the cell wall peptidoglycan: transfers peptidoglycan precursor phospho-MurNAc-pentapeptide from UDP-MurNAc-pentapeptide onto the lipid carrier undecaprenyl phosphate, yielding undecaprenyl-pyrophosphoryl-MurNAc-pentapeptide, known as lipid I. The sequence is that of Phospho-N-acetylmuramoyl-pentapeptide-transferase from Shewanella putrefaciens (strain CN-32 / ATCC BAA-453).